Consider the following 314-residue polypeptide: Ribonuclease Z (314 aa).

Zn(2+)-binding residues include His-60, His-62, Asp-64, His-65, His-140, Asp-209, and His-269. Residue Asp-64 is the Proton acceptor of the active site.

This sequence belongs to the RNase Z family. In terms of assembly, homodimer. Zn(2+) serves as cofactor.

It catalyses the reaction Endonucleolytic cleavage of RNA, removing extra 3' nucleotides from tRNA precursor, generating 3' termini of tRNAs. A 3'-hydroxy group is left at the tRNA terminus and a 5'-phosphoryl group is left at the trailer molecule.. Zinc phosphodiesterase, which displays some tRNA 3'-processing endonuclease activity. Probably involved in tRNA maturation, by removing a 3'-trailer from precursor tRNA. The protein is Ribonuclease Z of Methanococcus maripaludis (strain C5 / ATCC BAA-1333).